A 166-amino-acid polypeptide reads, in one-letter code: Apoptosis regulator M11L (166 aa).

A helical transmembrane segment spans residues 138 to 160; the sequence is SGGCKISVYLTAAVVGFVAYGIL.

Interacts with host BAX; this interaction inhibits apoptosis activation. Interacts with host BAK1.

It is found in the host mitochondrion. Its subcellular location is the host membrane. Functionally, plays a role in the inhibition of mitochondria-mediated apoptosis by blocking the activation of mitochondria-tranlocalized BAX thereby maintaining pro-apoptotic BAX in an inactive conformation. Also inhibits apoptosis in a BAX-independent manner by interacting with and inhibiting host BAK1. The sequence is that of Apoptosis regulator M11L (m011L) from Myxoma virus (strain Lausanne) (MYXV).